The sequence spans 2220 residues: Calcineurin-binding protein cabin-1 (2220 aa).

Ser10 and Ser11 each carry phosphoserine. Thr12 bears the Phosphothreonine mark. 2 positions are modified to phosphoserine: Ser20 and Ser66. 3 TPR repeats span residues 36–69 (AFAL…SLLR), 90–123 (YSTY…DSTD), and 125–157 (NLWY…NPDH). The segment at 361–400 (GAPVGDISGGDKSKKGVKRKKISEESGETAKRRSARVRNT) is disordered. Positions 382-391 (ISEESGETAK) are enriched in basic and acidic residues. Residues Ser433 and Ser450 each carry the phosphoserine modification. Residues 615–648 (VRVYWLKARFLALQGDMEQALENYDICTEMLQSS) form a TPR 4 repeat. At Ser673 the chain carries Phosphoserine. 2 TPR repeats span residues 1055–1088 (NELY…CPNR) and 1106–1139 (KLNS…DSSN). Disordered regions lie at residues 1299–1476 (FARG…STPT), 1668–1845 (AEGS…RLSR), 1916–2165 (AQRQ…GSIS), and 2197–2220 (VLET…YMDI). The segment covering 1301-1324 (RGEEKNTPKASEKEKACLVDEDSH) has biased composition (basic and acidic residues). Low complexity predominate over residues 1327-1349 (AGTLPGPGASLPSSSGPGLTSPP). Residues 1377-1397 (DSTAVALSDSSSTQDFFNEPT) are compositionally biased toward polar residues. The span at 1402-1412 (GSRKSYTEKRL) shows a compositional bias: basic and acidic residues. Ser1439 carries the phosphoserine modification. Over residues 1715-1725 (SGPGPEPGGKV) the composition is skewed to gly residues. Composition is skewed to basic and acidic residues over residues 1744-1753 (SGERKDKESP) and 1784-1794 (PARDRGPESRP). Pro residues predominate over residues 1812–1823 (PLTPAQPAPAPA). 2 stretches are compositionally biased toward polar residues: residues 1918 to 1927 (RQASGDTPTT) and 1975 to 1989 (TIIT…STLD). Thr1924 is subject to Phosphothreonine. The span at 2070 to 2081 (GKLRPEPRRDGE) shows a compositional bias: basic and acidic residues. The span at 2091-2112 (PLSSPPTAASSKAPSSGSAQPP) shows a compositional bias: low complexity. Ser2094 is modified (phosphoserine). Residues 2116-2153 (PGKPEPSRAKSRPLPNMPKLVIPSAATKFPPEITVTPP) form a required for interaction with calcineurin region. Phosphothreonine is present on residues Thr2151 and Thr2154. Positions 2207 to 2220 (LESETDEDDDYMDI) are enriched in acidic residues.

In terms of assembly, component of a complex that includes at least ASF1A, CABIN1, HIRA, histone H3.3 and UBN1. Interacts with calcineurin. Interacts with MEF2B. In terms of processing, activated through PKC-mediated hyperphosphorylation. Phosphorylation by the DNA damage kinases ATM and CHK2 enhances ubiquitination. Upon genotoxic stress, ubiquitination by the DCX(DDB2) E3 ubiquitin-protein ligase complex targets CABIN1 for proteasomal degradation, leading to the release of p53/TP53. In terms of tissue distribution, widely expressed in different tissues.

Its subcellular location is the nucleus. In terms of biological role, may be required for replication-independent chromatin assembly. May serve as a negative regulator of T-cell receptor (TCR) signaling via inhibition of calcineurin. Inhibition of activated calcineurin is dependent on both PKC and calcium signals. Acts as a negative regulator of p53/TP53 by keeping p53 in an inactive state on chromatin at promoters of a subset of it's target genes. This Homo sapiens (Human) protein is Calcineurin-binding protein cabin-1 (CABIN1).